A 713-amino-acid chain; its full sequence is Probable 1-deoxy-D-xylulose-5-phosphate synthase 2, chloroplastic (713 aa).

Residues 1–30 (MALQASSSPSMFRAIPTNTNASCRRKLQVR) constitute a chloroplast transit peptide. Thiamine diphosphate contacts are provided by residues H140 and 181 to 183 (GHS). D212 serves as a coordination point for Mg(2+). Residues 213-214 (GA), N241, Y362, and E444 contribute to the thiamine diphosphate site. N241 lines the Mg(2+) pocket.

Belongs to the transketolase family. DXPS subfamily. In terms of assembly, homodimer. Mg(2+) serves as cofactor. The cofactor is thiamine diphosphate.

It is found in the plastid. Its subcellular location is the chloroplast. It catalyses the reaction D-glyceraldehyde 3-phosphate + pyruvate + H(+) = 1-deoxy-D-xylulose 5-phosphate + CO2. Its pathway is metabolic intermediate biosynthesis; 1-deoxy-D-xylulose 5-phosphate biosynthesis; 1-deoxy-D-xylulose 5-phosphate from D-glyceraldehyde 3-phosphate and pyruvate: step 1/1. Its function is as follows. Catalyzes the acyloin condensation reaction between C atoms 2 and 3 of pyruvate and glyceraldehyde 3-phosphate to yield 1-deoxy-D-xylulose-5-phosphate (DXP). Is a limiting enzyme for plastidic isoprenoid biosynthesis and essential for chloroplast development. This Oryza sativa subsp. japonica (Rice) protein is Probable 1-deoxy-D-xylulose-5-phosphate synthase 2, chloroplastic.